The following is an 838-amino-acid chain: Leucine--tRNA ligase 1 (838 aa).

Residues 40–51 (PYPSGAGLHVGH) carry the 'HIGH' region motif. The 'KMSKS' region signature appears at 608 to 612 (KMSKS). Lys611 serves as a coordination point for ATP.

This sequence belongs to the class-I aminoacyl-tRNA synthetase family.

It is found in the cytoplasm. It carries out the reaction tRNA(Leu) + L-leucine + ATP = L-leucyl-tRNA(Leu) + AMP + diphosphate. In Rhizobium johnstonii (strain DSM 114642 / LMG 32736 / 3841) (Rhizobium leguminosarum bv. viciae), this protein is Leucine--tRNA ligase 1.